The sequence spans 114 residues: Ribosome-binding factor A (114 aa).

This sequence belongs to the RbfA family. In terms of assembly, monomer. Binds 30S ribosomal subunits, but not 50S ribosomal subunits or 70S ribosomes.

Its subcellular location is the cytoplasm. Functionally, one of several proteins that assist in the late maturation steps of the functional core of the 30S ribosomal subunit. Associates with free 30S ribosomal subunits (but not with 30S subunits that are part of 70S ribosomes or polysomes). Required for efficient processing of 16S rRNA. May interact with the 5'-terminal helix region of 16S rRNA. This Macrococcus caseolyticus (strain JCSC5402) (Macrococcoides caseolyticum) protein is Ribosome-binding factor A.